We begin with the raw amino-acid sequence, 135 residues long: Probable transporter XF_0766 (135 aa).

A run of 4 helical transmembrane segments spans residues 4–24 (YWYP…LLLL), 45–65 (AQDI…SVIF), 71–91 (VTVA…GLGT), and 114–134 (IVAT…MGVY).

The protein belongs to the TsuA/YedE (TC 9.B.102) family.

The protein localises to the cell inner membrane. In Xylella fastidiosa (strain 9a5c), this protein is Probable transporter XF_0766.